The following is a 464-amino-acid chain: Cysteine--tRNA ligase (464 aa).

A Zn(2+)-binding site is contributed by Cys-29. Positions 31–41 match the 'HIGH' region motif; that stretch reads ATVQGDPHIGH. Zn(2+) is bound by residues Cys-207, His-232, and Glu-236. The short motif at 263–267 is the 'KMSKS' region element; that stretch reads KMSKS. Lys-266 is a binding site for ATP.

It belongs to the class-I aminoacyl-tRNA synthetase family. In terms of assembly, monomer. Zn(2+) is required as a cofactor.

It localises to the cytoplasm. It catalyses the reaction tRNA(Cys) + L-cysteine + ATP = L-cysteinyl-tRNA(Cys) + AMP + diphosphate. In Rhodococcus jostii (strain RHA1), this protein is Cysteine--tRNA ligase.